A 231-amino-acid chain; its full sequence is Cytochrome c oxidase subunit 2 (231 aa).

At 1-14 (MAHPAQLGLQNATS) the chain is on the mitochondrial intermembrane side. Residues 15-45 (PIMEELIAFHDHALMIIFLISSLVLYVISLM) traverse the membrane as a helical segment. The Mitochondrial matrix portion of the chain corresponds to 46–59 (LTTKLTHTSTMNAQ). The helical transmembrane segment at 60 to 87 (EIEMIWTILPAIILIMIALPSLRILYMT) threads the bilayer. Residues 88–231 (DEFNKPYLTL…WASYLYIVSL (144 aa)) lie on the Mitochondrial intermembrane side of the membrane. Residues His-161, Cys-196, Glu-198, Cys-200, His-204, and Met-207 each coordinate Cu cation. Position 198 (Glu-198) interacts with Mg(2+).

The protein belongs to the cytochrome c oxidase subunit 2 family. In terms of assembly, component of the cytochrome c oxidase (complex IV, CIV), a multisubunit enzyme composed of 14 subunits. The complex is composed of a catalytic core of 3 subunits MT-CO1, MT-CO2 and MT-CO3, encoded in the mitochondrial DNA, and 11 supernumerary subunits COX4I, COX5A, COX5B, COX6A, COX6B, COX6C, COX7A, COX7B, COX7C, COX8 and NDUFA4, which are encoded in the nuclear genome. The complex exists as a monomer or a dimer and forms supercomplexes (SCs) in the inner mitochondrial membrane with NADH-ubiquinone oxidoreductase (complex I, CI) and ubiquinol-cytochrome c oxidoreductase (cytochrome b-c1 complex, complex III, CIII), resulting in different assemblies (supercomplex SCI(1)III(2)IV(1) and megacomplex MCI(2)III(2)IV(2)). Found in a complex with TMEM177, COA6, COX18, COX20, SCO1 and SCO2. Interacts with TMEM177 in a COX20-dependent manner. Interacts with COX20. Interacts with COX16. Requires Cu cation as cofactor.

It is found in the mitochondrion inner membrane. It carries out the reaction 4 Fe(II)-[cytochrome c] + O2 + 8 H(+)(in) = 4 Fe(III)-[cytochrome c] + 2 H2O + 4 H(+)(out). Its function is as follows. Component of the cytochrome c oxidase, the last enzyme in the mitochondrial electron transport chain which drives oxidative phosphorylation. The respiratory chain contains 3 multisubunit complexes succinate dehydrogenase (complex II, CII), ubiquinol-cytochrome c oxidoreductase (cytochrome b-c1 complex, complex III, CIII) and cytochrome c oxidase (complex IV, CIV), that cooperate to transfer electrons derived from NADH and succinate to molecular oxygen, creating an electrochemical gradient over the inner membrane that drives transmembrane transport and the ATP synthase. Cytochrome c oxidase is the component of the respiratory chain that catalyzes the reduction of oxygen to water. Electrons originating from reduced cytochrome c in the intermembrane space (IMS) are transferred via the dinuclear copper A center (CU(A)) of subunit 2 and heme A of subunit 1 to the active site in subunit 1, a binuclear center (BNC) formed by heme A3 and copper B (CU(B)). The BNC reduces molecular oxygen to 2 water molecules using 4 electrons from cytochrome c in the IMS and 4 protons from the mitochondrial matrix. In Alouatta palliata (Mantled howler monkey), this protein is Cytochrome c oxidase subunit 2 (MT-CO2).